We begin with the raw amino-acid sequence, 821 residues long: DNA ligase (821 aa).

NAD(+) contacts are provided by residues D50 to D54, S99 to L100, and E140. The active-site N6-AMP-lysine intermediate is the K142. Residues R163, E200, K319, and K343 each coordinate NAD(+). Zn(2+) contacts are provided by C452, C455, C470, and C476. Residues A742 to N821 form the BRCT domain.

It belongs to the NAD-dependent DNA ligase family. LigA subfamily. It depends on Mg(2+) as a cofactor. The cofactor is Mn(2+).

The enzyme catalyses NAD(+) + (deoxyribonucleotide)n-3'-hydroxyl + 5'-phospho-(deoxyribonucleotide)m = (deoxyribonucleotide)n+m + AMP + beta-nicotinamide D-nucleotide.. DNA ligase that catalyzes the formation of phosphodiester linkages between 5'-phosphoryl and 3'-hydroxyl groups in double-stranded DNA using NAD as a coenzyme and as the energy source for the reaction. It is essential for DNA replication and repair of damaged DNA. This Chromobacterium violaceum (strain ATCC 12472 / DSM 30191 / JCM 1249 / CCUG 213 / NBRC 12614 / NCIMB 9131 / NCTC 9757 / MK) protein is DNA ligase.